The chain runs to 3175 residues: Replicase polyprotein 1ab (3175 aa).

A C4-type; atypical zinc finger spans residues 25–44; it reads CEHGAGLCCEVDGSTLCAEC. Positions 66 to 156 constitute a Peptidase C31 domain; it reads SPVPVGHKFL…PAANSLIVTT (91 aa). Positions 157–260 constitute a Peptidase C32 domain; the sequence is DQEQDGFCWL…WSCLPAGNYG (104 aa). Catalysis depends on for Nsp1 papain-like cysteine proteinase activity residues Cys-164 and His-230. Residues 261 to 339 are OTU-like; that stretch reads GYNPPGDGAC…KQHWRVKRAK (79 aa). Positions 261 to 360 constitute a Peptidase C33 domain; the sequence is GYNPPGDGAC…RGICNCQRMS (100 aa). The For Nsp2 cysteine proteinase activity role is filled by Cys-270. Cys-319 contacts Zn(2+). His-332 (for Nsp2 cysteine proteinase activity) is an active-site residue. 3 residues coordinate Zn(2+): Cys-349, Cys-354, and Cys-356. The interval 386 to 451 is disordered; it reads VVTPEGQPRP…TRLQGASTQE (66 aa). The next 7 membrane-spanning stretches (helical) occupy residues 530–550, 551–571, 625–645, 829–849, 903–923, 935–955, and 977–997; these read AVIA…SFAI, GLIP…SSAN, FDAA…ILYL, LIGG…STFT, YWIA…RLAI, LVLL…SLAG, and LVTM…LMGL. The interval 530-645 is HD1; it reads AVIACLLPIW…DLCSFAILYL (116 aa). The interval 829–997 is HD2; the sequence is LIGGWIYGIC…ALAVYSLMGL (169 aa). The Peptidase S32 domain occupies 1065-1268; the sequence is GLFRSPKARG…MLIDGLSNRE (204 aa). Catalysis depends on charge relay system; for 3C-like serine proteinase activity residues His-1103, Asp-1129, and Ser-1184. A run of 4 helical transmembrane segments spans residues 1291–1311, 1333–1353, 1355–1375, and 1385–1405; these read AYLP…KSVG, CLFH…WFYI, AAGT…MLFV, and GWAI…AALG. The HD3 stretch occupies residues 1291-1405; it reads AYLPYVLGFF…SITMLAAALG (115 aa). Residue Asn-1501 is glycosylated (N-linked (GlcNAc...) asparagine; by host). The disordered stretch occupies residues 1577–1614; it reads NDTPVKPMPSRRRRKGLPKGAQLEWDRHQEEKRNAGDD. A compositionally biased stretch (basic and acidic residues) spans 1600 to 1612; that stretch reads EWDRHQEEKRNAG. One can recognise a NiRAN domain in the interval 1716–1883; sequence LANPVEAVNQ…DKVAAAVSGD (168 aa). Residues 2116–2251 form the RdRp catalytic domain; the sequence is KYCLETDLES…TTPNQHYAAS (136 aa). An AV ZBD domain is found at 2371–2438; sequence SAVCTVCGAA…SPKQMVPKVP (68 aa). Zn(2+)-binding residues include Cys-2374, Cys-2377, Cys-2387, Cys-2392, Cys-2395, His-2399, His-2402, Cys-2403, Cys-2412, His-2414, Cys-2423, and Cys-2426. Residues 2496 to 2661 enclose the (+)RNA virus helicase ATP-binding domain; it reads PGSHIAVPLQ…LRHFVSLEPL (166 aa). 2528–2535 lines the ATP pocket; the sequence is GPPGSGKT. The (+)RNA virus helicase C-terminal domain occupies 2662–2793; it reads RVCHRFGAAV…PPTACHLGQE (132 aa). The AV-Nsp11N/CoV-Nsp15M domain maps to 2840-2930; it reads KISCLPRVAQ…LTEWVDGKAR (91 aa). Positions 2932–3054 constitute a NendoU domain; that stretch reads LPDSLFSSGR…MVWRNATFYV (123 aa). Catalysis depends on residues His-2963, His-2978, and Lys-3007.

The protein belongs to the arteriviridae polyprotein family. Nsp1 interacts with cellular transcription cofactor SND1/p100. Specific enzymatic cleavages in vivo by its own proteases yield mature proteins. There are two alternative pathways for processing. Either nsp4-5 is cleaved, which represents the major pathway or the nsp5-6 and nsp6-7 are processed, which represents the minor pathway. The major pathway occurs when nsp2 acts as a cofactor for nsp4.

The protein localises to the host nucleus. Its subcellular location is the host cytoplasm. The protein resides in the host membrane. It is found in the host perinuclear region. The catalysed reaction is RNA(n) + a ribonucleoside 5'-triphosphate = RNA(n+1) + diphosphate. It carries out the reaction ATP + H2O = ADP + phosphate + H(+). The enzyme catalyses Thiol-dependent hydrolysis of ester, thioester, amide, peptide and isopeptide bonds formed by the C-terminal Gly of ubiquitin (a 76-residue protein attached to proteins as an intracellular targeting signal).. It catalyses the reaction uridylyl-uridylyl-ribonucleotide-RNA = a 3'-end uridylyl-2',3'-cyclophospho-uridine-RNA + a 5'-end dephospho-ribonucleoside-RNA. Its function is as follows. The replicase polyprotein 1ab is a multifunctional protein: it contains the activities necessary for the transcription of negative stranded RNA, leader RNA, subgenomic mRNAs and progeny virion RNA as well as proteinases responsible for the cleavage of the polyprotein into functional products. In terms of biological role, nsp1 is essential for viral subgenomic mRNA synthesis. Nsp2 cysteine proteinase which cleaves the nsp2/nsp3 site in the polyprotein. Also displays deubiquitinating and deISGylase activities. The deubiquitinating activity cleaves both ubiquitinated and ISGylated products and may therefore regulate ubiquitin and ISG15 dependent host innate immunity. Functionally, the 3C-like serine proteinase chain is responsible for the majority of cleavages as it cleaves the C-terminus of the polyprotein. Its function is as follows. The helicase chain, which contains a zinc finger structure, displays RNA and DNA duplex-unwinding activities with 5' to 3' polarity. In terms of biological role, plays a role in viral transcription/replication and prevents the simultaneous activation of host cell dsRNA sensors, such as MDA5/IFIH1, OAS, and PKR. Acts by degrading the 5'-polyuridines generated during replication of the poly(A) region of viral genomic and subgenomic RNAs. Catalyzes a two-step reaction in which a 2'3'-cyclic phosphate (2'3'-cP) is first generated by 2'-O transesterification, which is then hydrolyzed to a 3'-phosphate (3'-P). If not degraded, poly(U) RNA would hybridize with poly(A) RNA tails and activate host dsRNA sensors. This Equidae (horses) protein is Replicase polyprotein 1ab (rep).